A 133-amino-acid polypeptide reads, in one-letter code: Napin-1 (133 aa).

2 propeptides span residues 31–49 and 131–133; these read PSWTLDGEFDFEDDMEKQG and PSY.

This sequence belongs to the 2S seed storage albumins family. The mature protein consists of a small and a large chain linked by disulfide bonds. In terms of tissue distribution, cotyledons and the axis.

The small, basic, water-soluble napins are one of the two major kinds of storage proteins synthesized in the seed during its maturation. This Brassica napus (Rape) protein is Napin-1.